Reading from the N-terminus, the 682-residue chain is Transcription factor 12 (682 aa).

A 9aaTAD motif is present at residues 19–27 (DLLDFSAMF). 3 disordered regions span residues 25–122 (AMFS…LYSR), 140–219 (LGSP…PPTS), and 281–313 (SVSPTDINTSLPPMSSFHRGSTSSSPYVAASHT). Polar residues-rich tracts occupy residues 30 to 48 (PVNSGKTRPTTLGSSQFSG) and 56 to 76 (GTTSWGTSGQPSPSYDSSRGF). A phosphoserine mark is found at Ser47, Ser67, and Ser79. A compositionally biased stretch (basic and acidic residues) spans 81–93 (HYSDHLNDSRLGA). Ser98 carries the phosphoserine modification. 2 stretches are compositionally biased toward polar residues: residues 101 to 121 (PFMNSNLMGKTSERGSFSLYS) and 144 to 163 (AQLSSSGKPGTAYYSFSATS). Residue Lys110 forms a Glycyl lysine isopeptide (Lys-Gly) (interchain with G-Cter in SUMO2) linkage. Ser116 is modified (phosphoserine). The tract at residues 119 to 140 (LYSRDTGLPGCQSSLLRQDLGL) is leucine-zipper. A Glycyl lysine isopeptide (Lys-Gly) (interchain with G-Cter in SUMO2) cross-link involves residue Lys181. Positions 182-196 (KVRKVPPGLPSSVYA) are interaction with RUNX1T1. Positions 282-306 (VSPTDINTSLPPMSSFHRGSTSSSP) are enriched in polar residues. The residue at position 313 (Thr313) is a Phosphothreonine. Ser333 is modified (phosphoserine). Disordered regions lie at residues 349–395 (PDHT…SLHS) and 462–580 (SASM…ERRM). Low complexity predominate over residues 352–363 (TSSSFPSNPSTP). Composition is skewed to polar residues over residues 364–376 (VGSPSPLTGTSQW) and 383–395 (APSSPSYENSLHS). Residues 481–492 (SVLSSTVTTSST) show a composition bias toward low complexity. Over residues 506–517 (LQSQSGTVVTTE) the composition is skewed to polar residues. Composition is skewed to basic and acidic residues over residues 518 to 530 (IKTENKEKDENLH) and 536 to 551 (DDMKSDDESSQKDIKV). Lys519 participates in a covalent cross-link: Glycyl lysine isopeptide (Lys-Gly) (interchain with G-Cter in SUMO2). Ser540 bears the Phosphoserine mark. Lys550 participates in a covalent cross-link: Glycyl lysine isopeptide (Lys-Gly) (interchain with G-Cter in SUMO2). Thr557 carries the phosphothreonine modification. Residues Ser558 and Ser559 each carry the phosphoserine modification. The span at 568 to 580 (PEQKIEREKERRM) shows a compositional bias: basic and acidic residues. The bHLH domain occupies 577 to 630 (ERRMANNARERLRVRDINEAFKELGRMCQLHLKSEKPQTKLLILHQAVAVILSL). Residues Lys609 and Lys653 each participate in a glycyl lysine isopeptide (Lys-Gly) (interchain with G-Cter in SUMO2) cross-link. The tract at residues 632–655 (QQVRERNLNPKAACLKRREEEKVS) is class A specific domain. The segment at 651-682 (EEKVSAVSAEPPTTLPGTHPGLSETTNPMGHM) is disordered. The segment covering 661-672 (PPTTLPGTHPGL) has biased composition (low complexity). Residues 673-682 (SETTNPMGHM) show a composition bias toward polar residues.

Efficient DNA binding requires dimerization with another bHLH protein. Forms homo- or heterooligomers with myogenin, E12 and ITF2 proteins. Interacts with PTF1A. Interacts with NEUROD2. Interacts with RUNX1T1. Interacts with AML1-MTG8/ETO (via nervy homology region 2 in oligomerized form). Interacts with BHLHA9. In terms of tissue distribution, expressed in several tissues and cell types including skeletal muscle, thymus, and a B-cell line.

Its subcellular location is the nucleus. Functionally, transcriptional regulator. Involved in the initiation of neuronal differentiation. Activates transcription by binding to the E box (5'-CANNTG-3'). May be involved in the functional network that regulates the development of the GnRH axis. The protein is Transcription factor 12 (TCF12) of Homo sapiens (Human).